The chain runs to 186 residues: UPF0301 protein CGSHiEE_01530 (186 aa).

This sequence belongs to the UPF0301 (AlgH) family.

This chain is UPF0301 protein CGSHiEE_01530, found in Haemophilus influenzae (strain PittEE).